A 90-amino-acid chain; its full sequence is Probable Fe(2+)-trafficking protein (90 aa).

The protein belongs to the Fe(2+)-trafficking protein family. Monomer.

Could be a mediator in iron transactions between iron acquisition and iron-requiring processes, such as synthesis and/or repair of Fe-S clusters in biosynthetic enzymes. The chain is Probable Fe(2+)-trafficking protein from Pectobacterium carotovorum subsp. carotovorum (strain PC1).